Here is a 177-residue protein sequence, read N- to C-terminus: Large ribosomal subunit protein uL6 (177 aa).

Belongs to the universal ribosomal protein uL6 family. In terms of assembly, part of the 50S ribosomal subunit.

Its function is as follows. This protein binds to the 23S rRNA, and is important in its secondary structure. It is located near the subunit interface in the base of the L7/L12 stalk, and near the tRNA binding site of the peptidyltransferase center. This Paracoccus denitrificans (strain Pd 1222) protein is Large ribosomal subunit protein uL6.